Reading from the N-terminus, the 392-residue chain is Early estrogen-induced gene 1 protein (392 aa).

A C2 NT-type domain is found at 2 to 145 (AFLMKKKKFK…ILKVTIGMFL (144 aa)). Residues 129 to 138 (NTRQDNSILK) form a required for interaction with TNFRSF11A/RANK region. Residues 173-324 (LTCKGGGTSS…RKKDSVESHP (152 aa)) are disordered. Residues 183–194 (GGSSSTNSLTGS) show a composition bias toward low complexity. Polar residues predominate over residues 228–255 (SRNSSYASQQSKLSGYSTEHSRSSSLSD). Positions 262–273 (TSTSSSASGGLS) are enriched in low complexity. Basic and acidic residues-rich tracts occupy residues 281-300 (GMER…EKPP) and 307-324 (HLSD…ESHP).

This sequence belongs to the EEIG family. In terms of assembly, part of a complex composed of EEIG1, TNFRSF11A/RANK, PLCG2, GAB2, TEC and BTK; complex formation increases in the presence of TNFSF11/RANKL. Interacts with PRDM1/BLIMP1; following TNFSF11/RANKL stimulation in bone marrow-derived macrophages, the interaction promotes the binding of PRDM1/BLIMP1 to the gene promoter of IRF8. Interacts (via N-terminus) with TNFRSF11A/RANK (via cytoplasmic domain); when in the presence of TNFSF11/RANKL. As to expression, expressed during TNFSF11/RANKL-induced differentiation of bone marrow-derived macrophages to osteoclasts.

The protein resides in the nucleus. It is found in the cytoplasm. Its subcellular location is the membrane raft. Key component of TNFSF11/RANKL- and TNF-induced osteoclastogenesis pathways, thereby mediates bone resorption in pathological bone loss conditions. Required for TNFSF11/RANKL-induced osteoclastogenesis via its interaction with TNFRSF11A/RANK, thereby facilitates the downsteam transcription of NFATC1 and activation of PLCG2. Facilitates recruitment of the transcriptional repressor PRDM1/BLIMP1 to the promoter of the anti-osteoclastogenesis gene IRF8, thereby resulting in transcription of osteoclast differentiation factors. May play a role in estrogen action. The sequence is that of Early estrogen-induced gene 1 protein (Eeig1) from Mus musculus (Mouse).